A 700-amino-acid chain; its full sequence is uncharacterized protein (700 aa).

Cys307, Cys310, Cys314, and Cys558 together coordinate [4Fe-4S] cluster.

This sequence belongs to the AOR/FOR family. [4Fe-4S] cluster serves as cofactor. The cofactor is Mo-molybdopterin. Requires tungstopterin as cofactor.

This is an uncharacterized protein from Escherichia coli (strain K12).